The following is a 42-amino-acid chain: Conotoxin Au11.6 (42 aa).

Cystine bridges form between C6–C20, C13–C25, C19–C30, and C24–C37.

It belongs to the conotoxin I1 superfamily. As to expression, expressed by the venom duct.

The protein localises to the secreted. The polypeptide is Conotoxin Au11.6 (Conus aulicus (Princely cone)).